The chain runs to 69 residues: MTKPTTEQPTTVKCPTCQSAVIWNAESPFRPFCSKKCQMIDFGEWADEEKSIPGAPDMSDSDGWSEDQY.

Cysteine 14, cysteine 17, cysteine 33, and cysteine 37 together coordinate Zn(2+). Residues 46 to 69 are disordered; that stretch reads ADEEKSIPGAPDMSDSDGWSEDQY. Over residues 59-69 the composition is skewed to acidic residues; it reads SDSDGWSEDQY.

Belongs to the DNA gyrase inhibitor YacG family. As to quaternary structure, interacts with GyrB. Zn(2+) serves as cofactor.

Functionally, inhibits all the catalytic activities of DNA gyrase by preventing its interaction with DNA. Acts by binding directly to the C-terminal domain of GyrB, which probably disrupts DNA binding by the gyrase. This Aliivibrio fischeri (strain ATCC 700601 / ES114) (Vibrio fischeri) protein is DNA gyrase inhibitor YacG.